Reading from the N-terminus, the 213-residue chain is MMKMNRYALVAALAIFLSGCVGQREPAPVDEVKPAPEQPAEPQQPVPVVPSVPTIPQQPGPIEHEDQTAQPAPRVRHYDWNSAMQPMVGKMLQADGVTAGNVLLVDSVNNRTNGSLNAGEATETLRNALANNGKFTLVSAQQLAMAKQQLGLSPQDSLGTRSKAIGIARNVGAQYVLYSSAAGNVNAPSLQMQLMLVQTGEIIWSGKGAVQQQ.

An N-terminal signal peptide occupies residues 1–19 (MMKMNRYALVAALAIFLSG). The N-palmitoyl cysteine moiety is linked to residue cysteine 20. Cysteine 20 carries S-diacylglycerol cysteine lipidation. The interval 26 to 71 (PAPVDEVKPAPEQPAEPQQPVPVVPSVPTIPQQPGPIEHEDQTAQP) is disordered. Over residues 36–50 (PEQPAEPQQPVPVVP) the composition is skewed to pro residues.

The protein belongs to the LpoB family. Interacts with PBP1b.

It is found in the cell outer membrane. Functionally, regulator of peptidoglycan synthesis that is essential for the function of penicillin-binding protein 1B (PBP1b). In Citrobacter koseri (strain ATCC BAA-895 / CDC 4225-83 / SGSC4696), this protein is Penicillin-binding protein activator LpoB.